A 422-amino-acid polypeptide reads, in one-letter code: GTPase Obg (422 aa).

The 156-residue stretch at 1–156 folds into the Obg domain; that stretch reads MKFIDEVNVL…FALRLVLKVL (156 aa). One can recognise an OBG-type G domain in the interval 157–324; that stretch reads ADVGLVGKPS…LKAAIFKMLE (168 aa). Residues 163–170, 188–192, 209–212, 278–281, and 305–307 each bind GTP; these read GKPSAGKS, FTTLV, DLPG, NKSD, and SAL. Residues Ser170 and Thr190 each contribute to the Mg(2+) site. The OCT domain occupies 342–420; it reads NITLDRDALK…IGNFEFDWSD (79 aa).

It belongs to the TRAFAC class OBG-HflX-like GTPase superfamily. OBG GTPase family. In terms of assembly, monomer. Mg(2+) serves as cofactor.

The protein localises to the cytoplasm. An essential GTPase which binds GTP, GDP and possibly (p)ppGpp with moderate affinity, with high nucleotide exchange rates and a fairly low GTP hydrolysis rate. Plays a role in control of the cell cycle, stress response, ribosome biogenesis and in those bacteria that undergo differentiation, in morphogenesis control. This is GTPase Obg from Metamycoplasma arthritidis (strain 158L3-1) (Mycoplasma arthritidis).